Consider the following 822-residue polypeptide: MLQCLTSESEEGAEEREESSTEDLEELKEFVTLAFVRENTQKRLQNAQQHGKKKRKKKRLVINLSNCRYDSVRRAAQQYGLREAGDNDDWTLYWTDYSVSLERVMEMKSYQKINHFPGMSEICRKDLLARNMSRMLKLFPKDFHFFPRTWCLPADWGDLQTYSRTRKNKTYICKPDSGCQGRGIFITRSVKEIKPGEDMICQLYISKPFIIDGFKFDLRVYVLVTSCDPLRVFVYNEGLARFATTSYSHPNLDNLDEICMHLTNYSINKHSSNFVQDAFSGSKRKLSTFNSYMKTHGYDVEQIWRGIEDVIIKTLISAHPVIKHNYHTCFPSHTLNSACFEILGFDILLDRKLKPWLLEVNHSPSFSTDSKLDKEVKDSLLYDALVLINLGNCDKKKVLEEERQRGRFLQQCPNREIRLEEVKGFQAMRLQKTEEYEKKNCGGFRLIYPGLNLEKYDKFFQDNSSLFQNTVASRARELYARQLIQELRQKQEKKVFLKKARKEETQGESAGEQARDKVVRLQRQRQQPKCKTVATCPPKQSLHPVTLVSCTSGLLLNIRGLKKGEISESLEQKDTKEAMLIPCKPVSARNYSSVPDLRSANPSCFEPEFHVPNAKVKEVKSAFMVNIESTAQPITSVESSRDATAPISTSLESLASMSLSTSPECSSPESVHMVSYNHKQQKASFHKPMQEKKSKPLMFSKSRHLDLNCTSMKNDINRQYLMSEILQKVQMKKKRPLFPAPKSQYPTLSKERCPHSRSSSRKKEMNSPSVFVLQASHSRAESLNDLLVVATQARLDPRPSRSHSGTTTRDSSTQDPKHTATA.

Residues 1 to 24 (MLQCLTSESEEGAEEREESSTEDL) form a disordered region. The segment covering 8 to 24 (ESEEGAEEREESSTEDL) has biased composition (acidic residues). Residues 57 to 400 (KKRLVINLSN…GNCDKKKVLE (344 aa)) enclose the TTL domain. Residues Lys-174, 180–181 (QG), 202–205 (QLYI), and 215–217 (KFD) each bind ATP. Gln-180 lines the a protein pocket. Arg-241 serves as a coordination point for L-glutamate. 263–264 (TN) is an ATP binding site. L-glutamate is bound by residues Tyr-265, Ser-266, and Lys-283. Residues Asp-346, Glu-359, and Asn-361 each contribute to the Mg(2+) site. An a protein-binding site is contributed by His-362. Residues 371–450 (KLDKEVKDSL…CGGFRLIYPG (80 aa)) are c-MTBD region. Lys-377 contacts L-glutamate. 2 disordered regions span residues 736-772 (PLFP…SVFV) and 791-822 (TQAR…TATA). Residues 802 to 814 (SHSGTTTRDSSTQ) show a composition bias toward polar residues.

This sequence belongs to the tubulin--tyrosine ligase family. In terms of assembly, found in a complex with CEP41. It depends on Mg(2+) as a cofactor. Highly expressed in testis. Expressed in brain, heart, kidney, liver, lung, muscle and trachea. In the brain, specifically expressed in ependymal cilia.

It is found in the cytoplasm. The protein localises to the cytoskeleton. Its subcellular location is the cilium axoneme. It localises to the cilium basal body. The enzyme catalyses L-glutamyl-[protein] + L-glutamate + ATP = gamma-L-glutamyl-L-glutamyl-[protein] + ADP + phosphate + H(+). It catalyses the reaction (L-glutamyl)(n)-gamma-L-glutamyl-L-glutamyl-[protein] + L-glutamate + ATP = (L-glutamyl)(n+1)-gamma-L-glutamyl-L-glutamyl-[protein] + ADP + phosphate + H(+). Polyglutamylase which modifies both tubulin and non-tubulin proteins, generating alpha-linked polyglutamate side chains on the gamma-carboxyl group of specific glutamate residues of target proteins. Preferentially mediates ATP-dependent long polyglutamate chain elongation over the initiation step of the polyglutamylation reaction. Preferentially modifies the alpha-tubulin tail over a beta-tail. Promotes tubulin polyglutamylation which stimulates spastin/SPAST-mediated microtubule severing, thereby regulating microtubule functions. Mediates microtubule polyglutamylation in primary cilia axoneme which is important for ciliary structural formation and motility. Mediates microtubule polyglutamylation in motile cilia, necessary for the regulation of ciliary coordinated beating. Polyglutamylates non-tubulin protein nucleotidyltransferase CGAS, leading to CGAS DNA-binding inhibition, thereby preventing antiviral defense response. The sequence is that of Tubulin polyglutamylase TTLL6 from Mus musculus (Mouse).